The sequence spans 151 residues: Putative olfactory receptor 13C6 (151 aa).

The Extracellular segment spans residues 1–27 (MVSANQTASVTEFILLGLSAHPKLEKT). N-linked (GlcNAc...) asparagine glycosylation is present at asparagine 5. Residues 28 to 48 (FFVLILLMYLVILLGNGVLIL) traverse the membrane as a helical segment. Over 49-61 (MTVSNSHLHMPMY) the chain is Cytoplasmic. Residues 62–82 (FFLGNLSFLDICYTTSSVPLI) traverse the membrane as a helical segment. Residues 83-100 (LDSFLTPRKTISFSACAV) are Extracellular-facing. The chain crosses the membrane as a helical span at residues 101–121 (QMFLSFAMGATECVLLSMMAF).

It belongs to the G-protein coupled receptor 1 family.

Its subcellular location is the cell membrane. Functionally, odorant receptor. The polypeptide is Putative olfactory receptor 13C6 (Homo sapiens (Human)).